The following is a 313-amino-acid chain: Protein sprouty homolog 2 (313 aa).

Residues 1 to 14 (METRVQHGSGSQAL) are compositionally biased toward polar residues. Disordered regions lie at residues 1 to 31 (METRVQHGSGSQALLQARRDSGRPHGEPDLR) and 54 to 146 (EYTE…VADG). 2 stretches are compositionally biased toward basic and acidic residues: residues 17-31 (ARRDSGRPHGEPDLR) and 78-89 (KSERPHGLPEHR). Low complexity predominate over residues 108 to 131 (SRSISTVSTGSRSSTRTSTSSNSS). The segment covering 132-141 (EQRLLGSSSG) has biased composition (polar residues). The SPR domain maps to 175 to 289 (RCEDCGKCKC…CYDRVNRPGC (115 aa)).

The protein belongs to the sprouty family. Brain and interlimb region.

It is found in the cytoplasm. The protein resides in the membrane. Its function is as follows. Acts as an antagonist of FGF-induced retinal lens fiber differentiation. Inhibits TGFB-induced epithelial-to-mesenchymal transition in retinal lens epithelial cells. May play an important role in FGF-mediated patterning of the mid/hindbrain region by acting to modulate the signaling effects of FGF8. In Gallus gallus (Chicken), this protein is Protein sprouty homolog 2 (SPRY2).